A 28-amino-acid polypeptide reads, in one-letter code: Putative GDSL-motif lipase/hydrolase-like protein (28 aa).

The protein belongs to the 'GDSL' lipolytic enzyme family.

The chain is Putative GDSL-motif lipase/hydrolase-like protein from Populus euphratica (Euphrates poplar).